The chain runs to 562 residues: Phosphoenolpyruvate carboxykinase (ATP) (562 aa).

265–272 is an ATP binding site; that stretch reads GLSGTGKT.

Belongs to the phosphoenolpyruvate carboxykinase (ATP) family.

The catalysed reaction is oxaloacetate + ATP = phosphoenolpyruvate + ADP + CO2. It participates in carbohydrate biosynthesis; gluconeogenesis. In Dictyostelium discoideum (Social amoeba), this protein is Phosphoenolpyruvate carboxykinase (ATP) (pckA).